The sequence spans 403 residues: Tryptophan synthase beta chain (403 aa).

An N6-(pyridoxal phosphate)lysine modification is found at Lys-88.

Belongs to the TrpB family. Tetramer of two alpha and two beta chains. It depends on pyridoxal 5'-phosphate as a cofactor.

The enzyme catalyses (1S,2R)-1-C-(indol-3-yl)glycerol 3-phosphate + L-serine = D-glyceraldehyde 3-phosphate + L-tryptophan + H2O. Its pathway is amino-acid biosynthesis; L-tryptophan biosynthesis; L-tryptophan from chorismate: step 5/5. In terms of biological role, the beta subunit is responsible for the synthesis of L-tryptophan from indole and L-serine. This chain is Tryptophan synthase beta chain, found in Shewanella frigidimarina (strain NCIMB 400).